Consider the following 335-residue polypeptide: Mesoderm-specific transcript homolog protein (335 aa).

Helical transmembrane passes span 13–33, 88–108, and 266–286; these read WWVQ…HIPP, IWEG…LGFG, and VGAL…LDPV. One can recognise an AB hydrolase-1 domain in the interval 71-310; sequence IVVLLHGFPT…PRSTVSILDD (240 aa). An RVIALD motif is present at residues 98–103; sequence RVIALD.

Belongs to the AB hydrolase superfamily. In terms of tissue distribution, no detectable transcripts during preimplantation development. Isoform 1 was not detected in either in vitro-matured oocytes (IVF) or parthenogenetically activated (PA) blastocyst. Isoform 2 was expressed in IVF and PA blastocysts.

It localises to the endoplasmic reticulum membrane. This chain is Mesoderm-specific transcript homolog protein (MEST), found in Bos taurus (Bovine).